A 268-amino-acid chain; its full sequence is Large ribosomal subunit protein uL3 (268 aa).

Gln-156 is subject to N5-methylglutamine. Over residues 242–259 (VENEAAPADADNAAPEAA) the composition is skewed to low complexity. The tract at residues 242–268 (VENEAAPADADNAAPEAAADGEEGTQA) is disordered.

This sequence belongs to the universal ribosomal protein uL3 family. Part of the 50S ribosomal subunit. Forms a cluster with proteins L14 and L19. In terms of processing, methylated by PrmB.

Functionally, one of the primary rRNA binding proteins, it binds directly near the 3'-end of the 23S rRNA, where it nucleates assembly of the 50S subunit. This chain is Large ribosomal subunit protein uL3, found in Maricaulis maris (strain MCS10) (Caulobacter maris).